Consider the following 99-residue polypeptide: MALTSQDIARVANLARLELRPEETEHTLSQLNGFFALVEQMAAVNTDGVEPLAHPAAVIGEVALRLRDDIASEPNQREASQVSAPAVERGLFLVPKVIE.

Belongs to the GatC family. In terms of assembly, heterotrimer of A, B and C subunits.

It catalyses the reaction L-glutamyl-tRNA(Gln) + L-glutamine + ATP + H2O = L-glutaminyl-tRNA(Gln) + L-glutamate + ADP + phosphate + H(+). It carries out the reaction L-aspartyl-tRNA(Asn) + L-glutamine + ATP + H2O = L-asparaginyl-tRNA(Asn) + L-glutamate + ADP + phosphate + 2 H(+). Allows the formation of correctly charged Asn-tRNA(Asn) or Gln-tRNA(Gln) through the transamidation of misacylated Asp-tRNA(Asn) or Glu-tRNA(Gln) in organisms which lack either or both of asparaginyl-tRNA or glutaminyl-tRNA synthetases. The reaction takes place in the presence of glutamine and ATP through an activated phospho-Asp-tRNA(Asn) or phospho-Glu-tRNA(Gln). The polypeptide is Aspartyl/glutamyl-tRNA(Asn/Gln) amidotransferase subunit C (Polaromonas sp. (strain JS666 / ATCC BAA-500)).